Consider the following 506-residue polypeptide: Protein MGF 505-4R (506 aa).

The protein belongs to the asfivirus MGF 505 family.

Its function is as follows. Plays a role in virus cell tropism, and may be required for efficient virus replication in macrophages. The protein is Protein MGF 505-4R of Ornithodoros (relapsing fever ticks).